A 446-amino-acid chain; its full sequence is SPARC-related modular calcium-binding protein 2 (446 aa).

Positions 1–21 (MLLPQLCWLPLLAGLLPPVPA) are cleaved as a signal peptide. The Kazal-like domain occupies 34 to 86 (QDKDKDCSLDCAGSPQKPLCASDGRTFLSRCEFQRAKCKDPQLEIAYRGNCKD). Intrachain disulfides connect Cys40/Cys71, Cys44/Cys64, Cys53/Cys84, Cys90/Cys113, Cys124/Cys131, and Cys133/Cys153. The Thyroglobulin type-1 1 domain maps to 87 to 153 (VSRCVAERKY…TAVAHKTPRC (67 aa)). The interval 147–228 (AHKTPRCPGS…EHQSALEEAK (82 aa)) is disordered. Over residues 161–172 (LPQREGTGKTDD) the composition is skewed to basic and acidic residues. N-linked (GlcNAc...) asparagine glycosylation is present at Asn206. A compositionally biased stretch (polar residues) spans 206–216 (NKTNKNSVSSC). The Thyroglobulin type-1 2 domain maps to 213–281 (VSSCDQEHQS…TSTRYEQPKC (69 aa)). 3 disulfide bridges follow: Cys216–Cys240, Cys251–Cys258, and Cys260–Cys281. The segment covering 217-228 (DQEHQSALEEAK) has biased composition (basic and acidic residues). EF-hand domains lie at 347–382 (LEERVVHWYFKLLDKNSSGDIGKKEIKPFKRFLRKK) and 384–419 (KPKKCVKKFVEYCDVNNDKSISVQELMGCLGVAKED). Positions 360, 362, 364, 366, 371, 397, 399, 401, 403, and 408 each coordinate Ca(2+). A glycan (N-linked (GlcNAc...) asparagine) is linked at Asn362. Residues 416–446 (AKEDGKADTKKRHTPRGHAESTSNRQPRKQG) are disordered.

Binds various proteins from the extracellular matrix.

It localises to the secreted. It is found in the extracellular space. Its subcellular location is the extracellular matrix. The protein localises to the basement membrane. Its function is as follows. Promotes matrix assembly and cell adhesiveness. Can stimulate endothelial cell proliferation, migration, as well as angiogenesis. In Homo sapiens (Human), this protein is SPARC-related modular calcium-binding protein 2 (SMOC2).